Here is a 342-residue protein sequence, read N- to C-terminus: Probable dual-specificity RNA methyltransferase RlmN (342 aa).

Glu-91 acts as the Proton acceptor in catalysis. The region spanning 97 to 327 (YKHGNSICVS…TTIRREMGAD (231 aa)) is the Radical SAM core domain. Residues Cys-104 and Cys-332 are joined by a disulfide bond. The [4Fe-4S] cluster site is built by Cys-111, Cys-115, and Cys-118. S-adenosyl-L-methionine-binding positions include 158–159 (GE), Ser-190, 213–215 (SLH), and Asn-289. Cys-332 acts as the S-methylcysteine intermediate in catalysis.

Belongs to the radical SAM superfamily. RlmN family. [4Fe-4S] cluster serves as cofactor.

It is found in the cytoplasm. The enzyme catalyses adenosine(2503) in 23S rRNA + 2 reduced [2Fe-2S]-[ferredoxin] + 2 S-adenosyl-L-methionine = 2-methyladenosine(2503) in 23S rRNA + 5'-deoxyadenosine + L-methionine + 2 oxidized [2Fe-2S]-[ferredoxin] + S-adenosyl-L-homocysteine. The catalysed reaction is adenosine(37) in tRNA + 2 reduced [2Fe-2S]-[ferredoxin] + 2 S-adenosyl-L-methionine = 2-methyladenosine(37) in tRNA + 5'-deoxyadenosine + L-methionine + 2 oxidized [2Fe-2S]-[ferredoxin] + S-adenosyl-L-homocysteine. In terms of biological role, specifically methylates position 2 of adenine 2503 in 23S rRNA and position 2 of adenine 37 in tRNAs. In Clostridium botulinum (strain ATCC 19397 / Type A), this protein is Probable dual-specificity RNA methyltransferase RlmN.